Here is a 703-residue protein sequence, read N- to C-terminus: UvrABC system protein B (703 aa).

The Helicase ATP-binding domain occupies 33 to 419; the sequence is ERIENGENDV…SDGVVEQIIR (387 aa). ATP is bound at residue 46–53; sequence GATGTGKT. A Beta-hairpin motif is present at residues 99–122; sequence YYDYYQPEAYIPQTDTYIEKDSNI. The 154-residue stretch at 436 to 589 folds into the Helicase C-terminal domain; the sequence is QIDDLLAEIK…QIAYNQEHGI (154 aa). The 36-residue stretch at 659 to 694 folds into the UVR domain; the sequence is ADLIRQLSEQMHTAAEQLQFELAARLRDEIRDLKKE.

It belongs to the UvrB family. Forms a heterotetramer with UvrA during the search for lesions. Interacts with UvrC in an incision complex.

The protein localises to the cytoplasm. The UvrABC repair system catalyzes the recognition and processing of DNA lesions. A damage recognition complex composed of 2 UvrA and 2 UvrB subunits scans DNA for abnormalities. Upon binding of the UvrA(2)B(2) complex to a putative damaged site, the DNA wraps around one UvrB monomer. DNA wrap is dependent on ATP binding by UvrB and probably causes local melting of the DNA helix, facilitating insertion of UvrB beta-hairpin between the DNA strands. Then UvrB probes one DNA strand for the presence of a lesion. If a lesion is found the UvrA subunits dissociate and the UvrB-DNA preincision complex is formed. This complex is subsequently bound by UvrC and the second UvrB is released. If no lesion is found, the DNA wraps around the other UvrB subunit that will check the other stand for damage. The polypeptide is UvrABC system protein B (Bifidobacterium longum (strain NCC 2705)).